The sequence spans 89 residues: Phosphocarrier protein HPr (89 aa).

Residues 1 to 88 (MLEHELIVTN…ELFENRFNED (88 aa)) form the HPr domain. The active-site Pros-phosphohistidine intermediate is His-15. The residue at position 46 (Ser-46) is a Phosphoserine; by HPrK/P.

Belongs to the HPr family.

It is found in the cytoplasm. With respect to regulation, phosphorylation on Ser-46 inhibits the phosphoryl transfer from enzyme I to HPr. Its function is as follows. General (non sugar-specific) component of the phosphoenolpyruvate-dependent sugar phosphotransferase system (sugar PTS). This major carbohydrate active-transport system catalyzes the phosphorylation of incoming sugar substrates concomitantly with their translocation across the cell membrane. The phosphoryl group from phosphoenolpyruvate (PEP) is transferred to the phosphoryl carrier protein HPr by enzyme I. Phospho-HPr then transfers it to the PTS EIIA domain. In Xylella fastidiosa (strain 9a5c), this protein is Phosphocarrier protein HPr (ptsH).